The sequence spans 235 residues: 2-C-methyl-D-erythritol 4-phosphate cytidylyltransferase (235 aa).

This sequence belongs to the IspD/TarI cytidylyltransferase family. IspD subfamily.

The enzyme catalyses 2-C-methyl-D-erythritol 4-phosphate + CTP + H(+) = 4-CDP-2-C-methyl-D-erythritol + diphosphate. Its pathway is isoprenoid biosynthesis; isopentenyl diphosphate biosynthesis via DXP pathway; isopentenyl diphosphate from 1-deoxy-D-xylulose 5-phosphate: step 2/6. Its function is as follows. Catalyzes the formation of 4-diphosphocytidyl-2-C-methyl-D-erythritol from CTP and 2-C-methyl-D-erythritol 4-phosphate (MEP). The protein is 2-C-methyl-D-erythritol 4-phosphate cytidylyltransferase of Pseudomonas putida (strain GB-1).